The chain runs to 521 residues: Probable ATP-dependent RNA helicase Dbp45A (521 aa).

The short motif at 7 to 35 (NPFQILGLRPWLVKQLTKLGLKGATPIQQ) is the Q motif element. Positions 38-209 (IPAILAGQDC…IFPIASDCFE (172 aa)) constitute a Helicase ATP-binding domain. 51-58 (AKTGSGKT) provides a ligand contact to ATP. The short motif at 157–160 (DEAD) is the DEAD box element. The Helicase C-terminal domain maps to 237-386 (VLIEALRKYR…EHPIDQRMVE (150 aa)). Positions 448–521 (KRKLQHAEPA…GRADVKKDKA (74 aa)) are disordered. Composition is skewed to basic and acidic residues over residues 460-482 (EEGK…FEKK) and 502-521 (LNKE…KDKA).

Belongs to the DEAD box helicase family. DDX49/DBP8 subfamily.

It catalyses the reaction ATP + H2O = ADP + phosphate + H(+). Functionally, probable ATP-binding RNA helicase. The polypeptide is Probable ATP-dependent RNA helicase Dbp45A (Dbp45A) (Drosophila melanogaster (Fruit fly)).